The sequence spans 323 residues: Probable cell division protein WhiA (323 aa).

Residues 275–309 (TLKELGEMLTTGQVSKSGINHRLRKLDQIAERLRS) constitute a DNA-binding region (H-T-H motif).

It belongs to the WhiA family.

In terms of biological role, involved in cell division and chromosome segregation. The polypeptide is Probable cell division protein WhiA (Listeria welshimeri serovar 6b (strain ATCC 35897 / DSM 20650 / CCUG 15529 / CIP 8149 / NCTC 11857 / SLCC 5334 / V8)).